We begin with the raw amino-acid sequence, 302 residues long: S-crystallin SL4 (302 aa).

Repeat copies occupy residues 45–54 (GGYAVQSRGD), 55–64 (GGYYVKSRGD), and 65–74 (GGYPVQGRGD). The interval 45–84 (GGYAVQSRGDGGYYVKSRGDGGYPVQGRGDTGYSSQTRSD) is 4 X approximate tandem repeats of G-G-Y-[AYP]-V-[QK]-[SG]-R-G-D. Short sequence motifs (cell attachment site) lie at residues 52–54 (RGD), 62–64 (RGD), and 72–74 (RGD). The interval 68 to 92 (PVQGRGDTGYSSQTRSDDACLGQGR) is disordered. Residues 75–84 (TGYSSQTRSD) form a 4; approximate repeat. The Cell attachment site motif lies at 113 to 115 (RGD). Residues 118–205 (SDINSGLYSG…ESASRRSRNH (88 aa)) form a disordered region. Composition is skewed to basic and acidic residues over residues 129-166 (RMDD…HYRS) and 177-192 (AEDR…RIDI). One can recognise a GST C-terminal domain in the interval 183–302 (GHSDSHRIDI…YIKRRYQSDF (120 aa)).

This sequence belongs to the GST superfamily.

Its function is as follows. S-crystallins are structural components of squids and octopi eye lens. The chain is S-crystallin SL4 from Nototodarus sloanii (Wellington flying squid).